The sequence spans 438 residues: Proline--tRNA ligase (438 aa).

This sequence belongs to the class-II aminoacyl-tRNA synthetase family. ProS type 2 subfamily. Homodimer.

The protein localises to the cytoplasm. It carries out the reaction tRNA(Pro) + L-proline + ATP = L-prolyl-tRNA(Pro) + AMP + diphosphate. Catalyzes the attachment of proline to tRNA(Pro) in a two-step reaction: proline is first activated by ATP to form Pro-AMP and then transferred to the acceptor end of tRNA(Pro). The protein is Proline--tRNA ligase of Rhodopseudomonas palustris (strain TIE-1).